Here is a 352-residue protein sequence, read N- to C-terminus: Protein RecA (352 aa).

Position 67–74 (G67–T74) interacts with ATP. Residues D333–F352 form a disordered region. Residues N343 to F352 show a composition bias toward acidic residues.

The protein belongs to the RecA family.

It is found in the cytoplasm. Can catalyze the hydrolysis of ATP in the presence of single-stranded DNA, the ATP-dependent uptake of single-stranded DNA by duplex DNA, and the ATP-dependent hybridization of homologous single-stranded DNAs. It interacts with LexA causing its activation and leading to its autocatalytic cleavage. This Klebsiella pneumoniae (strain 342) protein is Protein RecA.